A 361-amino-acid chain; its full sequence is Cell cycle control protein 50A (361 aa).

The disordered stretch occupies residues 1–28; that stretch reads MAMNYNAKDEVDGGPPCPPGGTAKTRRP. An N-acetylalanine modification is found at A2. Positions 2-48 are required for ATPase and aminophospholipid flippase activity; that stretch reads AMNYNAKDEVDGGPPCPPGGTAKTRRPDNTAFKQQRLPAWQPILTAG. The Cytoplasmic portion of the chain corresponds to 2–49; that stretch reads AMNYNAKDEVDGGPPCPPGGTAKTRRPDNTAFKQQRLPAWQPILTAGT. The interaction with ATP8A2 stretch occupies residues 49-348; sequence TVLPTFFIIG…LGVVLLVINH (300 aa). The chain crosses the membrane as a helical span at residues 50–70; sequence VLPTFFIIGLIFIPIGIGIFV. At 71-325 the chain is on the exoplasmic loop side; that stretch reads TSNNIREIEI…SWMGGKNPFL (255 aa). 3 disulfide bridges follow: C91–C104, C94–C102, and C157–C171. N-linked (GlcNAc...) asparagine glycans are attached at residues N180, N190, and N294. A helical membrane pass occupies residues 326–346; that stretch reads GIAYITIGSISFLLGVVLLVI. Topologically, residues 347–361 are cytoplasmic; it reads NHKYRNSSNTADITI.

It belongs to the CDC50/LEM3 family. In terms of assembly, component of various P4-ATPase flippase complexes which consists of a catalytic alpha subunit and an accessory beta subunit. Interacts with ATP8A1 to form a flippase complex; this complex forms an intermediate phosphoenzyme. Interacts with ATP8A2 to form a flippase complex. ATP8B1:TMEM30A and ATP8B2:TMEM30A flippase complexes have been shown to form intermediate phosphoenzymes in vitro. Interacts with alpha subunits ATP8A1, ATP8B1, ATP8B2, ATP8B4, ATP10A, ATP10B, ATP10D, ATP11A, ATP11B and ATP11C. N-glycosylated; contributes to ATP8A2:TMEM30A flippase complex assembly but not to functional activity. Expressed in photoreceptor cells; detected in retina outer segment and other retinal layers (at protein level).

The protein localises to the membrane. It is found in the golgi apparatus. Its subcellular location is the cytoplasmic vesicle. The protein resides in the secretory vesicle membrane. It localises to the apical cell membrane. The protein localises to the photoreceptor inner segment. It is found in the cell projection. Its subcellular location is the cilium. The protein resides in the photoreceptor outer segment. Functionally, accessory component of a P4-ATPase flippase complex which catalyzes the hydrolysis of ATP coupled to the transport of aminophospholipids from the outer to the inner leaflet of various membranes and ensures the maintenance of asymmetric distribution of phospholipids. Phospholipid translocation also seems to be implicated in vesicle formation and in uptake of lipid signaling molecules. The beta subunit may assist in binding of the phospholipid substrate. Required for the proper folding, assembly and ER to Golgi exit of the ATP8A2:TMEM30A flippase complex. ATP8A2:TMEM30A may be involved in regulation of neurite outgrowth, and, reconstituted to liposomes, predomiminantly transports phosphatidylserine (PS) and to a lesser extent phosphatidylethanolamine (PE). The ATP8A1:TMEM30A flippase complex seems to play a role in regulation of cell migration probably involving flippase-mediated translocation of phosphatidylethanolamine (PE) at the plasma membrane. Required for the formation of the ATP8A2, ATP8B1 and ATP8B2 P-type ATPAse intermediate phosphoenzymes. Involved in uptake of platelet-activating factor (PAF). Can also mediate the export of alpha subunits ATP8A1, ATP8B1, ATP8B2, ATP8B4, ATP10A, ATP10B, ATP10D, ATP11A, ATP11B and ATP11C from the ER to other membrane localizations. In Bos taurus (Bovine), this protein is Cell cycle control protein 50A.